The chain runs to 151 residues: uncharacterized protein (151 aa).

3 consecutive transmembrane segments (helical) span residues 14–34, 45–65, and 91–111; these read GAALLDYIIVSVPLLLIYWLI, ISLVVLLYSILLPMFWRGYLI, and VIVAGLVYCITFGLGLIASLI.

The protein localises to the cell membrane. This is an uncharacterized protein from Bacillus subtilis (strain 168).